The primary structure comprises 73 residues: Crustacean hyperglycemic hormone (73 aa).

Intrachain disulfides connect Cys-7–Cys-43, Cys-23–Cys-39, and Cys-26–Cys-52. Position 73 is a valine amide (Val-73).

This sequence belongs to the arthropod CHH/MIH/GIH/VIH hormone family. As to expression, produced by the medulla terminalis X-organ in the eyestalks and transported to the sinus gland where they are stored and released.

The protein localises to the secreted. Functionally, hormone found in the sinus gland of isopods and decapods which controls the blood sugar level. Has a secretagogue action over the amylase released from the midgut gland. May act as a stress hormone and may be involved in the control of molting and reproduction. This chain is Crustacean hyperglycemic hormone, found in Jasus lalandii (Cape rock lobster).